We begin with the raw amino-acid sequence, 313 residues long: tRNA pseudouridine synthase B (313 aa).

Asp-42 acts as the Nucleophile in catalysis.

It belongs to the pseudouridine synthase TruB family. Type 1 subfamily.

The catalysed reaction is uridine(55) in tRNA = pseudouridine(55) in tRNA. Functionally, responsible for synthesis of pseudouridine from uracil-55 in the psi GC loop of transfer RNAs. In Prochlorococcus marinus (strain SARG / CCMP1375 / SS120), this protein is tRNA pseudouridine synthase B.